The following is an 85-amino-acid chain: Small ribosomal subunit protein bS16 (85 aa).

Belongs to the bacterial ribosomal protein bS16 family.

The protein is Small ribosomal subunit protein bS16 of Buchnera aphidicola subsp. Schizaphis graminum (strain Sg).